The sequence spans 342 residues: scyllo-inositol 2-dehydrogenase (NAD(+)) (342 aa).

It belongs to the Gfo/Idh/MocA family.

The catalysed reaction is scyllo-inositol + NAD(+) = scyllo-inosose + NADH + H(+). Its pathway is polyol metabolism. Functionally, catalyzes the reversible NAD(+)-dependent oxidation of scyllo-inositol (SI) to 2,4,6/3,5-pentahydroxycyclohexanone (scyllo-inosose or SIS). Is required for SI catabolism that allows B.subtilis to utilize SI as the sole carbon source for growth. Cannot use NADP(+) instead of NAD(+). The sequence is that of scyllo-inositol 2-dehydrogenase (NAD(+)) from Bacillus subtilis (strain 168).